The following is a 181-amino-acid chain: Adenine phosphoribosyltransferase (181 aa).

It belongs to the purine/pyrimidine phosphoribosyltransferase family. In terms of assembly, homodimer.

It localises to the cytoplasm. It carries out the reaction AMP + diphosphate = 5-phospho-alpha-D-ribose 1-diphosphate + adenine. It functions in the pathway purine metabolism; AMP biosynthesis via salvage pathway; AMP from adenine: step 1/1. In terms of biological role, catalyzes a salvage reaction resulting in the formation of AMP, that is energically less costly than de novo synthesis. In Aliivibrio salmonicida (strain LFI1238) (Vibrio salmonicida (strain LFI1238)), this protein is Adenine phosphoribosyltransferase.